We begin with the raw amino-acid sequence, 378 residues long: Cobalt-precorrin-5B C(1)-methyltransferase (378 aa).

It belongs to the CbiD family.

The catalysed reaction is Co-precorrin-5B + S-adenosyl-L-methionine = Co-precorrin-6A + S-adenosyl-L-homocysteine. It functions in the pathway cofactor biosynthesis; adenosylcobalamin biosynthesis; cob(II)yrinate a,c-diamide from sirohydrochlorin (anaerobic route): step 6/10. Functionally, catalyzes the methylation of C-1 in cobalt-precorrin-5B to form cobalt-precorrin-6A. The sequence is that of Cobalt-precorrin-5B C(1)-methyltransferase from Synechocystis sp. (strain ATCC 27184 / PCC 6803 / Kazusa).